The sequence spans 180 residues: MEYKCCSDKYIWSAHDSYFYKGLSELILDIDELIYLSQEKIRKDFVFINLNTASLNEFIRRDSEWLSAVKGKQVVLIAARKSEALANYWYYNSNIRGVVYVGLSRDIRKELAYVINGRFLRKDIKKDKITDREMKIIRMTAQGMQPKSIARIENCSVKTVYTHRRNAEAKLYSKIYKLVQ.

An HTH luxR-type domain is found at 122–180; the sequence is KDIKKDKITDREMKIIRMTAQGMQPKSIARIENCSVKTVYTHRRNAEAKLYSKIYKLVQ. Positions 146 to 165 form a DNA-binding region, H-T-H motif; sequence PKSIARIENCSVKTVYTHRR.

It belongs to the EcpR/MatA family.

It is found in the cytoplasm. In terms of biological role, part of the ecpRABCDE operon, which encodes the E.coli common pilus (ECP). ECP plays a dual role in early-stage biofilm development and host cell recognition. Positively regulates the expression of the ecp operon. This chain is HTH-type transcriptional regulator EcpR (ecpR), found in Klebsiella pneumoniae (strain 342).